Here is a 333-residue protein sequence, read N- to C-terminus: Lipoyl synthase (333 aa).

[4Fe-4S] cluster-binding residues include Cys56, Cys61, Cys67, Cys82, Cys86, Cys89, and Ser293. The Radical SAM core domain occupies 68 to 282; that stretch reads WEDREATFLI…GRVGAELGFS (215 aa). The interval 301 to 333 is disordered; it reads QQAMTARDQDRSEMSVPPESVSENSHGQRPSPW. The segment covering 314 to 325 has biased composition (low complexity); it reads MSVPPESVSENS.

The protein belongs to the radical SAM superfamily. Lipoyl synthase family. It depends on [4Fe-4S] cluster as a cofactor.

It is found in the cytoplasm. It catalyses the reaction [[Fe-S] cluster scaffold protein carrying a second [4Fe-4S](2+) cluster] + N(6)-octanoyl-L-lysyl-[protein] + 2 oxidized [2Fe-2S]-[ferredoxin] + 2 S-adenosyl-L-methionine + 4 H(+) = [[Fe-S] cluster scaffold protein] + N(6)-[(R)-dihydrolipoyl]-L-lysyl-[protein] + 4 Fe(3+) + 2 hydrogen sulfide + 2 5'-deoxyadenosine + 2 L-methionine + 2 reduced [2Fe-2S]-[ferredoxin]. It participates in protein modification; protein lipoylation via endogenous pathway; protein N(6)-(lipoyl)lysine from octanoyl-[acyl-carrier-protein]: step 2/2. Functionally, catalyzes the radical-mediated insertion of two sulfur atoms into the C-6 and C-8 positions of the octanoyl moiety bound to the lipoyl domains of lipoate-dependent enzymes, thereby converting the octanoylated domains into lipoylated derivatives. In Frankia casuarinae (strain DSM 45818 / CECT 9043 / HFP020203 / CcI3), this protein is Lipoyl synthase.